Reading from the N-terminus, the 261-residue chain is DNA repair protein RecO (261 aa).

Belongs to the RecO family.

Involved in DNA repair and RecF pathway recombination. The chain is DNA repair protein RecO from Chlorobium limicola (strain DSM 245 / NBRC 103803 / 6330).